The sequence spans 110 residues: NADH-quinone oxidoreductase subunit K (110 aa).

A run of 3 helical transmembrane segments spans residues 13–33 (LNHY…GLFM), 41–61 (ILMS…AFSV), and 73–93 (IIIL…LLIY).

It belongs to the complex I subunit 4L family. NDH-1 is composed of 14 different subunits. Subunits NuoA, H, J, K, L, M, N constitute the membrane sector of the complex.

The protein resides in the cell inner membrane. It catalyses the reaction a quinone + NADH + 5 H(+)(in) = a quinol + NAD(+) + 4 H(+)(out). Its function is as follows. NDH-1 shuttles electrons from NADH, via FMN and iron-sulfur (Fe-S) centers, to quinones in the respiratory chain. The immediate electron acceptor for the enzyme in this species is believed to be ubiquinone. Couples the redox reaction to proton translocation (for every two electrons transferred, four hydrogen ions are translocated across the cytoplasmic membrane), and thus conserves the redox energy in a proton gradient. This chain is NADH-quinone oxidoreductase subunit K, found in Rickettsia prowazekii (strain Madrid E).